The following is a 281-amino-acid chain: Transformer-2 protein homolog alpha (281 aa).

Positions 1–116 (MSDVEENNFE…TGSRANPDPN (116 aa)) are disordered. An N-acetylserine modification is found at S2. S2 and S14 each carry phosphoserine. T24 is subject to Phosphothreonine. Over residues 51 to 82 (RSRSKSRSRSRRHSHRRYTRSRSHSHRRRSRS) the composition is skewed to basic residues. Phosphoserine occurs at positions 80, 82, and 84. Phosphothreonine is present on T86. Over residues 90-108 (RRRRSRSHSPMSNRRRHTG) the composition is skewed to basic residues. S94 and S96 each carry phosphoserine. An RRM domain is found at 117–195 (TCLGVFGLSL…RRIRVDYSIT (79 aa)). A Glycyl lysine isopeptide (Lys-Gly) (interchain with G-Cter in SUMO2) cross-link involves residue K196. Residues 196 to 223 (KRAHTPTPGIYMGRPTHSGGGGGGGGGG) are linker. Residues 199 to 281 (HTPTPGIYMG…RSRSYSPRRY (83 aa)) are disordered. Phosphothreonine occurs at positions 200 and 202. Positions 213–231 (SGGGGGGGGGGGGGGGGGG) are enriched in gly residues. Position 233 is an omega-N-methylarginine (R233). The span at 233 to 257 (RRRDSYYDRGYDRGYDRYEDYDYRR) shows a compositional bias: basic and acidic residues. S237 is modified (phosphoserine). Over residues 267 to 281 (YRSRSRSRSYSPRRY) the composition is skewed to basic residues.

This sequence belongs to the splicing factor SR family. In terms of assembly, binds to A3 enhancer proteins SRp75, SRp55, SRp40 and SRp30. Interacts with ILDR1 (via C-terminus) and ILDR2. Phosphorylated in the RS domains. In terms of tissue distribution, expressed in inner ear.

The protein resides in the nucleus. In terms of biological role, sequence-specific RNA-binding protein which participates in the control of pre-mRNA splicing. This Mus musculus (Mouse) protein is Transformer-2 protein homolog alpha.